The following is a 491-amino-acid chain: (1S)-1-hydroxy-luvungin A synthase CYP88A37 (491 aa).

Residues 5-25 form a helical membrane-spanning segment; sequence FSWLILALAIFIGTYAFVFGV. C439 provides a ligand contact to heme.

This sequence belongs to the cytochrome P450 family. The cofactor is heme. As to expression, expressed in maturing fruits and in juice vesicles.

The protein localises to the membrane. It catalyses the reaction luvungin A + reduced [NADPH--hemoprotein reductase] + O2 = (1S)-1-hydroxy-luvungin A + oxidized [NADPH--hemoprotein reductase] + H2O + H(+). It functions in the pathway secondary metabolite biosynthesis; terpenoid biosynthesis. Functionally, monooxygenase involved in the biosynthesis of limonoids triterpene natural products such as limonin, a compound with insecticidal activity responsible for the bitter taste in citrus. Catalyzes the conversion of luvungin A to (1S)-1-hydroxy-luvungin A. The polypeptide is (1S)-1-hydroxy-luvungin A synthase CYP88A37 (Citrus sinensis (Sweet orange)).